Reading from the N-terminus, the 469-residue chain is MTNLTLMNQLTPKQIVEKLDQYIIGQTGAKKSVAVALRNRYRRQLMDESIRDEIIPKNILMIGPTGVGKTEIARRIAKIVRAPFSKVEATKFTEVGYVGRDVESMVRDLVEVSVRLVKEEKMQLVRVKAEKNAEKRLIKLLAPSQKKKQTTSQNPLEALFGSMNQPDEPAEEEVDQELKNKRSQIEWRLQNGELDDEIVTVEVKEQQNPMFDMMRGTGMDQMSGMQDALSGMFPAKKKKRKVTVREAKKILFEDEASKLIDSDELAAEGIHRAEQMGMIFIDEIDKIASKEGGGNAQVSREGVQRDILPIVEGSQISTKYGTVNTEYILFIAAGAFHMSKPSDLIPELQGRFPIRIELDKLTQEDFYKILTEPDNALIKQYKALLKTEGIDLIFTKEAVERIAEIAFQVNQDSDNIGARRLHTILEKLLEDLLFEAPEINMESIKVTENYVNEKLAPIMTNKDLTQFIL.

Residues I24 and 66-71 contribute to the ATP site; that span reads GVGKTE. The interval 159-179 is disordered; the sequence is LFGSMNQPDEPAEEEVDQELK. Residues D282, E347, and R419 each contribute to the ATP site.

The protein belongs to the ClpX chaperone family. HslU subfamily. A double ring-shaped homohexamer of HslV is capped on each side by a ring-shaped HslU homohexamer. The assembly of the HslU/HslV complex is dependent on binding of ATP.

Its subcellular location is the cytoplasm. In terms of biological role, ATPase subunit of a proteasome-like degradation complex; this subunit has chaperone activity. The binding of ATP and its subsequent hydrolysis by HslU are essential for unfolding of protein substrates subsequently hydrolyzed by HslV. HslU recognizes the N-terminal part of its protein substrates and unfolds these before they are guided to HslV for hydrolysis. This chain is ATP-dependent protease ATPase subunit HslU, found in Listeria innocua serovar 6a (strain ATCC BAA-680 / CLIP 11262).